The sequence spans 837 residues: Putative dimethyl sulfoxide reductase catalytic subunit A (837 aa).

Residues 1–36 (MSDTDLNATRRDVLKSGAVAAVGLSGGGLLSTLQEA) constitute a signal peptide (tat-type signal). Positions 53–110 (DQVVKTACSPNCRGKCPLDVFVRDGQIKKVEQQVPAAKTFKRGCTLGMTHLQRVYNAD) constitute a 4Fe-4S Mo/W bis-MGD-type domain. Residues C60, C64, C68, and C96 each contribute to the [4Fe-4S] cluster site. N200 lines the Mo-bis(molybdopterin guanine dinucleotide) pocket. Residues 813-837 (EHQSNEYTQHNPRGSSGTATDGDSS) form a disordered region. Residues 826–837 (GSSGTATDGDSS) show a composition bias toward low complexity.

The protein belongs to the prokaryotic molybdopterin-containing oxidoreductase family. Probable multiprotein complex that likely consists of DmsA, DmsB and DmsC. The cofactor is Mo-bis(molybdopterin guanine dinucleotide). [4Fe-4S] cluster serves as cofactor. In terms of processing, predicted to be exported by the Tat system. The position of the signal peptide cleavage has not been experimentally proven.

The protein localises to the cell membrane. The enzyme catalyses dimethyl sulfide + a menaquinone + H2O = dimethyl sulfoxide + a menaquinol. Its function is as follows. Dimethyl sulfoxide (DMSO) reductase catalyzes the reduction of dimethyl sulfoxide (DMSO) to dimethyl sulfide (DMS) during anaerobic respiration; it can also use trimethylamine N-oxide (TMAO) as terminal electron acceptor. Required for anaerobic respiration on DMSO and TMAO; subunit A is proposed to be catalytically active. This chain is Putative dimethyl sulfoxide reductase catalytic subunit A (dmsA), found in Halobacterium salinarum (strain ATCC 700922 / JCM 11081 / NRC-1) (Halobacterium halobium).